Reading from the N-terminus, the 782-residue chain is MNSQQEWEHAYSLAERMYNKQAPTKREELNPTERVICSRFETIFDYDPFKDEYTFRDQALLFSTPVQPKCRTVAEADLHELKENTAKLNIPMPSYINICPIYALLPFTVLVFNNSQHAHKSLSDDMERAAATFRNPHESEIVPGAMYIFKQKHGKAYRCIILSEDGDMNIPDAERKYLVAFIDNVQIVSVKQKTLFVSDQFSIKDYPCALHCARIVGISAIRKSYVSGMNQFILNFYDAKEKRKAGMFAFIYKLDKEEKKLVIDYPSLLGTPKTTSTEIRTAVGHQIVASKDPVSLTFEQLNKKEVPEFKYLNSTDDDSDVELDLIEHDTKSVNPVASSHPTSSSMDDCPYGRASIARAKDYQLRLPPHSQKGLSSSSLLGSSYPVSNSIKNDITKQSESNRADATNISFSSFESTKSDISPQNNQNVEETSTPTVPPNSTIQENEEDEIMSPASIIRAPSRLAGSLNKVSIERPNTPLPTSSKNSEHNMSEISTYEASSISSHHLVPQSPSVPKTNYTVPVVQRPLTAPEKFRDPFGGPGSSDILNTKMLCSEKNIVPSNKFGRQISPGKDDKNENYQYSRMETKPQTLFAPVLDENQRQSSSSNMMCQIPDISSVAQGSNAPKTAPNDSVNSVAPDDIHETDKRGNHCKSVTEDPKDNKDPTAVTTLEDPDINDENFSVQSICSETFVETDQKLMEVETGADAFTESITDQFAQMSEGLKKLAINLADSVRTAAIEKNHDAFIANIHAMEIISKKVPDDIDKRFWKMKIVEARKLEAAFD.

Positions 138–203 constitute a Tudor; degenerate domain; the sequence is ESEIVPGAMY…TLFVSDQFSI (66 aa). Polar residues-rich tracts occupy residues 332–346 and 413–443; these read SVNP…SSSM and FEST…STIQ. 4 disordered regions span residues 332-351, 413-448, 472-492, and 617-672; these read SVNP…DCPY, FEST…NEED, IERP…NMSE, and VAQG…LEDP. Over residues 617–634 the composition is skewed to polar residues; sequence VAQGSNAPKTAPNDSVNS. A compositionally biased stretch (basic and acidic residues) spans 638–662; sequence DDIHETDKRGNHCKSVTEDPKDNKD.

The protein resides in the cytoplasm. The protein localises to the perinuclear region. The polypeptide is Hypersensitive to pore-forming toxin protein 40 (Caenorhabditis elegans).